A 347-amino-acid polypeptide reads, in one-letter code: Selenide, water dikinase (347 aa).

Cysteine 17 is a catalytic residue. Residues lysine 20 and 48–50 (TRD) contribute to the ATP site. Aspartate 51 contributes to the Mg(2+) binding site. Residues aspartate 68, aspartate 91, and 139-141 (GHS) contribute to the ATP site. Mg(2+) is bound at residue aspartate 91. Aspartate 227 contributes to the Mg(2+) binding site.

It belongs to the selenophosphate synthase 1 family. Class I subfamily. In terms of assembly, homodimer. Mg(2+) serves as cofactor.

It carries out the reaction hydrogenselenide + ATP + H2O = selenophosphate + AMP + phosphate + 2 H(+). In terms of biological role, synthesizes selenophosphate from selenide and ATP. This is Selenide, water dikinase from Escherichia coli O139:H28 (strain E24377A / ETEC).